The following is a 964-amino-acid chain: Cycloisomaltooligosaccharide glucanotransferase (964 aa).

Positions 1–30 (MRVKILPLVFMTLLLIVPSQMLLPSGQANA) are cleaved as a signal peptide. 2 consecutive CBM6 domains span residues 413 to 538 (DRYE…LTLG) and 740 to 863 (NMYE…LKLD).

It belongs to the glycosyl hydrolase 66 family.

The enzyme catalyses cyclizes part of a (1-&gt;6)-alpha-D-glucan chain by formation of a (1-&gt;6)-alpha-D-glucosidic bond.. In terms of biological role, produces cycloisomaltooligosaccharide from dextran. The chain is Cycloisomaltooligosaccharide glucanotransferase (cit) from Niallia circulans (Bacillus circulans).